A 301-amino-acid chain; its full sequence is dTDP-4-dehydrorhamnose reductase (301 aa).

NADH-binding positions include 10–12 (GQV), Asp-30, 39–40 (DF), and 63–65 (AHT). 11–12 (QV) lines the NADPH pocket. NADPH contacts are provided by residues 39–40 (DF), 63–65 (AHT), and Tyr-102. 104-105 (TD) serves as a coordination point for dTDP-beta-L-rhamnose. Residues Tyr-129 and Lys-133 each contribute to the NADH site. Residues Tyr-129 and Lys-133 each coordinate NADPH. Tyr-129 (proton donor/acceptor) is an active-site residue. Trp-155 provides a ligand contact to dTDP-beta-L-rhamnose.

It belongs to the dTDP-4-dehydrorhamnose reductase family. As to quaternary structure, homodimer. It depends on Mg(2+) as a cofactor.

The catalysed reaction is dTDP-beta-L-rhamnose + NADP(+) = dTDP-4-dehydro-beta-L-rhamnose + NADPH + H(+). It participates in carbohydrate biosynthesis; dTDP-L-rhamnose biosynthesis. The protein operates within bacterial outer membrane biogenesis; LPS O-antigen biosynthesis. In terms of biological role, involved in the biosynthesis of the dTDP-L-rhamnose which is an important component of lipopolysaccharide (LPS). Catalyzes the reduction of dTDP-6-deoxy-L-lyxo-4-hexulose to yield dTDP-L-rhamnose. RmlD uses NADH and NADPH nearly equally well. This Escherichia coli protein is dTDP-4-dehydrorhamnose reductase.